The chain runs to 311 residues: MTLEHDRKGISIAVSAEVQAALDAGQPVVALESTVISHGLPYPHNLELALAMEQEVRDQGAVPATVGIVAGVPTVGMDAAAIRRFAHPDPHHPPLKVSRRDIGYVVAAGGDGATTVAATMALAHLAGVQVFATGGIGGVHRGARETWDVSADLTELERTPVLVVCAGAKAILDLPATLEYLETGGVPVLGWRTAEFPAFYSVSSGLPVAYAQDASFVARAWKAHRALGGAGMVLAVPPPVEDAIDRAVVEAAIERALNRAVKEGVHGPAVTPFLLAALARETEGESVRANVALLRQNARIAAQVATAIAGI.

Glu32 functions as the Proton donor in the catalytic mechanism. Residues Lys96 and Val116 each contribute to the substrate site. Position 148 (Asp148) interacts with Mn(2+). Ser150–Asp152 lines the substrate pocket. Lys169 acts as the Nucleophile in catalysis.

The protein belongs to the pseudouridine-5'-phosphate glycosidase family. As to quaternary structure, homotrimer. The cofactor is Mn(2+).

The enzyme catalyses D-ribose 5-phosphate + uracil = psi-UMP + H2O. In terms of biological role, catalyzes the reversible cleavage of pseudouridine 5'-phosphate (PsiMP) to ribose 5-phosphate and uracil. Functions biologically in the cleavage direction, as part of a pseudouridine degradation pathway. The chain is Pseudouridine-5'-phosphate glycosidase from Roseiflexus sp. (strain RS-1).